Reading from the N-terminus, the 418-residue chain is Tyrosine--tRNA ligase (418 aa).

Y34 contributes to the L-tyrosine binding site. Residues 39–48 (PTGDSMHIGH) carry the 'HIGH' region motif. L-tyrosine is bound by residues Y166 and Q170. A 'KMSKS' region motif is present at residues 228–232 (KFGKT). K231 lines the ATP pocket. One can recognise an S4 RNA-binding domain in the interval 350 to 418 (QNIVLWLVDA…KKRYFLAHVK (69 aa)).

Belongs to the class-I aminoacyl-tRNA synthetase family. TyrS type 1 subfamily. In terms of assembly, homodimer.

It localises to the cytoplasm. It catalyses the reaction tRNA(Tyr) + L-tyrosine + ATP = L-tyrosyl-tRNA(Tyr) + AMP + diphosphate + H(+). In terms of biological role, catalyzes the attachment of tyrosine to tRNA(Tyr) in a two-step reaction: tyrosine is first activated by ATP to form Tyr-AMP and then transferred to the acceptor end of tRNA(Tyr). This is Tyrosine--tRNA ligase from Lactiplantibacillus plantarum (strain ATCC BAA-793 / NCIMB 8826 / WCFS1) (Lactobacillus plantarum).